Here is a 3625-residue protein sequence, read N- to C-terminus: Spectinabilin polyketide synthase system protein NorA' (3625 aa).

A Ketosynthase family 3 (KS3) 1 domain is found at 33–459 (REPVAVVSMA…GTNAHVILEQ (427 aa)). Residues cysteine 206, histidine 341, and histidine 381 each act as for beta-ketoacyl synthase 1 activity in the active site. A Malonyl-CoA:ACP transacylase (MAT) 1 domain is found at 564–881 (LVFPGQGSQW…SLGELFAGGR (318 aa)). The interval 930–1054 (HPWWGAVTEL…GTLTRTARPA (125 aa)) is N-terminal hotdog fold 1. In terms of domain architecture, PKS/mFAS DH 1 spans 930–1200 (HPWWGAVTEL…VRPLTPGSGA (271 aa)). Histidine 962 (proton acceptor; for dehydratase activity 1) is an active-site residue. The tract at residues 1066–1200 (ADPLPVDRIY…VRPLTPGSGA (135 aa)) is C-terminal hotdog fold 1. Aspartate 1125 acts as the Proton donor; for dehydratase activity 1 in catalysis. Residues 1443-1620 (GTVLVTGAAG…LSLAWGLWAE (178 aa)) form the Ketoreductase (KR) 1 domain. Residues 1722 to 1797 (GAVLETVRAQ…SLAAHLLGRL (76 aa)) form the Carrier 1 domain. The residue at position 1757 (serine 1757) is an O-(pantetheine 4'-phosphoryl)serine. In terms of domain architecture, Ketosynthase family 3 (KS3) 2 spans 1815–2231 (DEPIAIIGMA…GTNAHVVLEQ (417 aa)). Catalysis depends on for beta-ketoacyl synthase 2 activity residues cysteine 1978, histidine 2113, and histidine 2153. A Malonyl-CoA:ACP transacylase (MAT) 2 domain is found at 2336–2656 (VFVFPGQGAQ…VAEAHTRGIA (321 aa)). The segment at 2704-2829 (HPLLGARMEL…GLLSEEEPAT (126 aa)) is N-terminal hotdog fold 2. The PKS/mFAS DH 2 domain maps to 2704-2981 (HPLLGARMEL…ARPVPAGQLR (278 aa)). Residue histidine 2736 is the Proton acceptor; for dehydratase activity 2 of the active site. Residues 2842–2981 (AEPIELVGFY…ARPVPAGQLR (140 aa)) are C-terminal hotdog fold 2. Aspartate 2903 functions as the Proton donor; for dehydratase activity 2 in the catalytic mechanism. In terms of domain architecture, Ketoreductase (KR) 2 spans 3182-3361 (GTVLITGASG…QSLAWGLWSE (180 aa)). The Carrier 2 domain occupies 3462–3537 (RQLTDLVRAQ…ALAGHLSTRL (76 aa)). An O-(pantetheine 4'-phosphoryl)serine modification is found at serine 3497.

In terms of assembly, the spectinabilin polyketide synthase complex is composed of 4 proteins, NorA, NorA', NorB and NorC. The complex comprises 6 modules with a total of 28 catalytic domains catalyzing 7 chain elongations. NorA comprises one module, NorA' two modules, NorB one module and NorC two modules. The cofactor is pantetheine 4'-phosphate.

The enzyme catalyses 4-nitrobenzoyl-CoA + 6 (S)-methylmalonyl-CoA + malonyl-CoA + 6 NADPH + 12 H(+) = demethyldeoxyspectinabilin + 7 CO2 + 6 NADP(+) + 8 CoA + 5 H2O. Its pathway is antibiotic biosynthesis. It participates in polyketide biosynthesis. Its function is as follows. Component of a type I modular polyketide synthase (PKS) that generates the backbone of the antibiotic spectinabilin (also known as neoaureothin), a nitroaryl-substituted polyketide metabolite. This PKS system accepts the unusual starter unit 4-nitrobenzoyl-CoA and extends it by 6 molecules of (S)-methylmalonyl-CoA and a single molecule of malonyl-CoA. The polypeptide is Spectinabilin polyketide synthase system protein NorA' (Streptomyces orinoci (Streptoverticillium orinoci)).